The chain runs to 476 residues: Inner membrane transporter YcaM (476 aa).

At 1–9 (MAGNVQEKQ) the chain is on the cytoplasmic side. Residues 10–30 (LRWYNIALMSFITVWGFGNVV) traverse the membrane as a helical segment. At 31 to 38 (NNYANQGL) the chain is on the periplasmic side. Residues 39–59 (VVVFSWVFIFALYFTPYALIV) form a helical membrane-spanning segment. Residues 60–80 (GQLGSTFKDGKGGVSTWIKHT) lie on the Cytoplasmic side of the membrane. The chain crosses the membrane as a helical span at residues 81–101 (MGPGLAYLAAWTYWVVHIPYL). Topologically, residues 102–125 (AQKPQAILIALGWAMKGDGSLIKE) are periplasmic. A helical membrane pass occupies residues 126–146 (YSVVALQGLTLVLFIFFMWVA). Topologically, residues 147–154 (SRGMKSLK) are cytoplasmic. Residues 155 to 175 (IVGSVAGIAMFVMSLLYVAMA) form a helical membrane-spanning segment. The Periplasmic portion of the chain corresponds to 176-195 (VTAPAITEVHIATTNITWET). The chain crosses the membrane as a helical span at residues 196–216 (FIPHIDFTYITTISMLVFAVG). Residues 217–240 (GAEKISPYVNQTRNPGKEFPKGML) are Cytoplasmic-facing. Residues 241 to 261 (CLAVMVAVCAILGSLAMGMMF) traverse the membrane as a helical segment. Residues 262-291 (DSRNIPDDLMTNGQYYAFQKLGEYYNMGNT) lie on the Periplasmic side of the membrane. The helical transmembrane segment at 292–312 (LMVIYAIANTLGQVAALVFSI) threads the bilayer. Residues 313–343 (DAPLKVLLGDADSKYIPASLCRTNASGTPVN) lie on the Cytoplasmic side of the membrane. A helical membrane pass occupies residues 344–364 (GYFLTLVLVAILIMLPTLGIG). Residues 365–375 (DMNNLYKWLLN) are Periplasmic-facing. Residues 376 to 396 (LNSVVMPLRYLWVFVAFIAVV) traverse the membrane as a helical segment. Topologically, residues 397–414 (RLAQKYKPEYVFIRNKPL) are cytoplasmic. The chain crosses the membrane as a helical span at residues 415–435 (AMTVGIWCFAFTAFACLTGIF). The Periplasmic segment spans residues 436-448 (PKMEAFTAEWTFQ). The chain crosses the membrane as a helical span at residues 449–469 (LALNVATPFVLVGLGLIFPLL). The Cytoplasmic segment spans residues 470 to 476 (ARKANSK).

The protein belongs to the amino acid-polyamine-organocation (APC) superfamily.

It localises to the cell inner membrane. The chain is Inner membrane transporter YcaM (ycaM) from Escherichia coli (strain K12).